The following is a 363-amino-acid chain: Cyanide hydratase (363 aa).

The CN hydrolase domain maps to 6 to 285 (YKAACVTSEP…DGLLFVDIDL (280 aa)). The Proton acceptor role is filled by glutamate 46. Lysine 128 is an active-site residue. Cysteine 163 functions as the Nucleophile in the catalytic mechanism.

The protein belongs to the carbon-nitrogen hydrolase superfamily. Nitrilase family. As to quaternary structure, oligomer of dimers, forming left-handed helical fibers.

It carries out the reaction formamide = hydrogen cyanide + H2O. Its function is as follows. Catalyzes the hydration of cyanide to formamide. Degradation of cyanide may be important for plant pathogenic fungi in infection of cyanogenic plants. The sequence is that of Cyanide hydratase (CyhAB) from Alternaria brassicicola (Dark leaf spot agent).